The following is a 352-amino-acid chain: Carbohydrate sulfotransferase 11 (352 aa).

The Cytoplasmic portion of the chain corresponds to 1 to 16 (MKPALLEVMRMNRICR). A helical; Signal-anchor for type II membrane protein transmembrane segment spans residues 17 to 37 (MVLATCFGSFILVIFYFQSML). The Lumenal segment spans residues 38 to 352 (HPVMRRNPFG…YSVPNYLKLD (315 aa)). Residues 124-130 (PKVACTN) and 186-194 (REPFERLVS) each bind 3'-phosphoadenylyl sulfate. Residues Asn-205, Asn-223, Asn-321, and Asn-342 are each glycosylated (N-linked (GlcNAc...) asparagine).

Belongs to the sulfotransferase 2 family. In terms of processing, N-glycosylated; required for activity and stability. In terms of tissue distribution, predominantly expressed in brain and kidney. Also expressed at weaker level in heart, spleen and lung. Expressed in developing chondrocytes.

The protein resides in the golgi apparatus membrane. The enzyme catalyses chondroitin beta-D-glucuronate + n 3'-phosphoadenylyl sulfate = chondroitin 4'-sulfate + n adenosine 3',5'-bisphosphate + n H(+). Functionally, catalyzes the transfer of sulfate to position 4 of the N-acetylgalactosamine (GalNAc) residue of chondroitin. Chondroitin sulfate constitutes the predominant proteoglycan present in cartilage and is distributed on the surfaces of many cells and extracellular matrices. Can also sulfate Gal residues in desulfated dermatan sulfate. Preferentially sulfates in GlcA-&gt;GalNAc unit than in IdoA-&gt;GalNAc unit. Does not form 4, 6-di-O-sulfated GalNAc when chondroitin sulfate C is used as an acceptor. In Mus musculus (Mouse), this protein is Carbohydrate sulfotransferase 11 (Chst11).